The sequence spans 174 residues: 3-hydroxydecanoyl-[acyl-carrier-protein] dehydratase (174 aa).

H73 is an active-site residue.

The protein belongs to the thioester dehydratase family. FabA subfamily. In terms of assembly, homodimer.

The protein localises to the cytoplasm. It catalyses the reaction a (3R)-hydroxyacyl-[ACP] = a (2E)-enoyl-[ACP] + H2O. It carries out the reaction (3R)-hydroxydecanoyl-[ACP] = (2E)-decenoyl-[ACP] + H2O. The enzyme catalyses (2E)-decenoyl-[ACP] = (3Z)-decenoyl-[ACP]. Its pathway is lipid metabolism; fatty acid biosynthesis. Functionally, necessary for the introduction of cis unsaturation into fatty acids. Catalyzes the dehydration of (3R)-3-hydroxydecanoyl-ACP to E-(2)-decenoyl-ACP and then its isomerization to Z-(3)-decenoyl-ACP. Can catalyze the dehydratase reaction for beta-hydroxyacyl-ACPs with saturated chain lengths up to 16:0, being most active on intermediate chain length. The polypeptide is 3-hydroxydecanoyl-[acyl-carrier-protein] dehydratase (Saccharophagus degradans (strain 2-40 / ATCC 43961 / DSM 17024)).